We begin with the raw amino-acid sequence, 202 residues long: Small ribosomal subunit protein uS4c (202 aa).

The S4 RNA-binding domain occupies 90–153 (MRLDNIIFRL…KSETIISKNI (64 aa)).

Belongs to the universal ribosomal protein uS4 family. As to quaternary structure, part of the 30S ribosomal subunit. Contacts protein S5. The interaction surface between S4 and S5 is involved in control of translational fidelity.

It localises to the plastid. The protein localises to the chloroplast. Functionally, one of the primary rRNA binding proteins, it binds directly to 16S rRNA where it nucleates assembly of the body of the 30S subunit. Its function is as follows. With S5 and S12 plays an important role in translational accuracy. This is Small ribosomal subunit protein uS4c (rps4) from Catharomnion ciliatum (Moss).